We begin with the raw amino-acid sequence, 165 residues long: V-type proton ATPase 16 kDa proteolipid subunit (165 aa).

The Lumenal segment spans residues 1 to 10 (MSSVFSGDET). A helical transmembrane segment spans residues 11–33 (APFFGFLGAAAALVFSCMGAAYG). Topologically, residues 34-55 (TAKSGVGVASMGVMRPELVMKS) are cytoplasmic. The helical transmembrane segment at 56–76 (IVPVVMAGVLGIYGLIIAVII) threads the bilayer. Residues 77 to 95 (STGINPKAKPYFLFDGYAH) are Lumenal-facing. Residues 96-117 (LSSGLACGLAGLAAGMAIGIVG) form a helical membrane-spanning segment. Residues 118 to 129 (DAGVRANAQQPK) lie on the Cytoplasmic side of the membrane. A helical membrane pass occupies residues 130 to 155 (LFVGMILILIFAEALALYGLIVGIIL). The Lumenal segment spans residues 156–165 (SSRAGQSRAD).

The protein belongs to the V-ATPase proteolipid subunit family. In terms of assembly, V-ATPase is a heteromultimeric enzyme composed of a peripheral catalytic V1 complex (main components: subunits A, B, C, D, E, and F) attached to an integral membrane V0 proton pore complex (main component: the proteolipid protein; which is present as a hexamer that forms the proton-conducting pore).

Its subcellular location is the vacuole membrane. Functionally, proton-conducting pore forming subunit of the membrane integral V0 complex of vacuolar ATPase. V-ATPase is responsible for acidifying a variety of intracellular compartments in eukaryotic cells. The chain is V-type proton ATPase 16 kDa proteolipid subunit (VATP-P1) from Avena sativa (Oat).